Here is a 67-residue protein sequence, read N- to C-terminus: uncharacterized protein (67 aa).

A helical membrane pass occupies residues 19 to 39 (ISFIIFFFFYFFFFYFFYGFW).

It localises to the membrane. This is an uncharacterized protein from Dictyostelium discoideum (Social amoeba).